Reading from the N-terminus, the 236-residue chain is Mediator of RNA polymerase II transcription subunit 20 (236 aa).

This sequence belongs to the Mediator complex subunit 20 family. Component of the Mediator complex.

The protein localises to the nucleus. In terms of biological role, component of the Mediator complex, a coactivator involved in the regulated transcription of nearly all RNA polymerase II-dependent genes. Mediator functions as a bridge to convey information from gene-specific regulatory proteins to the basal RNA polymerase II transcription machinery. Mediator is recruited to promoters by direct interactions with regulatory proteins and serves as a scaffold for the assembly of a functional preinitiation complex with RNA polymerase II and the general transcription factors. This Debaryomyces hansenii (strain ATCC 36239 / CBS 767 / BCRC 21394 / JCM 1990 / NBRC 0083 / IGC 2968) (Yeast) protein is Mediator of RNA polymerase II transcription subunit 20 (SRB2).